A 357-amino-acid polypeptide reads, in one-letter code: Vomeronasal type-1 receptor 5 (357 aa).

The Extracellular segment spans residues 1 to 3; that stretch reads MLK. The helical transmembrane segment at 4 to 24 threads the bilayer; it reads LVIIENMAEIMLFSLDLLLFS. The Cytoplasmic portion of the chain corresponds to 25–52; it reads TDILCFNFPSKMIKLPGFITIQIFFYPQ. Residues 53–73 form a helical membrane-spanning segment; it reads ASFGISANTILLLFHIFTFVF. Residues 74–81 are Extracellular-facing; that stretch reads SHRSKSID. The chain crosses the membrane as a helical span at residues 82-102; sequence MIISHLSLIHILLLFTQAILV. Residues 103 to 130 are Cytoplasmic-facing; sequence SLDFFGSQNTQDDLRYKVIVFLNKVMRG. The helical transmembrane segment at 131–151 threads the bilayer; sequence LSICTPCLLSVLQAIISPSIF. The Extracellular segment spans residues 152 to 163; it reads SLAKLKHPSASH. A helical membrane pass occupies residues 164 to 184; that stretch reads ILGFFLFSWVLNMFIGVIFCC. At 185-269 the chain is on the cytoplasmic side; the sequence is TLRLPPVKRG…RVSPVKRASQ (85 aa). A helical membrane pass occupies residues 270 to 290; sequence AILLLVSFVFTYWVDFTFSFS. Over 291 to 300 the chain is Extracellular; that stretch reads GGVTWINDSL. A glycan (N-linked (GlcNAc...) asparagine) is linked at N297. Residues 301–321 traverse the membrane as a helical segment; it reads LVWLQVIVANSYAAISPLMLI. Residues 322 to 357 are Cytoplasmic-facing; it reads YADNQIFKTLQMLWFKYLSPPKLMLKFNRQCGSTKK.

Belongs to the G-protein coupled receptor 1 family.

The protein resides in the cell membrane. Its function is as follows. Putative pheromone receptor. The protein is Vomeronasal type-1 receptor 5 (VN1R5) of Homo sapiens (Human).